We begin with the raw amino-acid sequence, 406 residues long: Paracaspase (406 aa).

The segment at I193–T374 is caspase-like. Residues H266 and C311 contribute to the active site.

The protein belongs to the peptidase C14B family.

In terms of biological role, not required for DIF-induced autophagic cell death and necrotic cell death. This is Paracaspase (pcp) from Dictyostelium discoideum (Social amoeba).